The following is a 533-amino-acid chain: Adenylate kinase 7 (533 aa).

The segment at 177–426 (PVKICILGPP…EPRNYGLTDE (250 aa)) is adenylate kinase. Position 187 to 192 (187 to 192 (AVGKSS)) interacts with ATP. The segment at 207–265 (QLKDVISEAIAKLETIVAPKDIGEGKEEVEEEEEEENVEDAQELLDGIKESMEQNAGQL) is NMP. AMP contacts are provided by residues 242 to 265 (ENVEDAQELLDGIKESMEQNAGQL), 292 to 295 (GFPK), and Gln299. Residues 347-357 (NLPERIVAGTH) are LID. An AMP-binding site is contributed by Arg365. Residue Gly397 participates in ATP binding. Residues 419–487 (RNYGLTDEEK…EERELLEAQS (69 aa)) adopt a coiled-coil conformation. A DPY-30 region spans residues 489–533 (PLRNYLMTYVMPTLIQGLNECCNVRPEDPVDFLAEYLFKNNPEAQ).

This sequence in the central section; belongs to the adenylate kinase family. It in the C-terminal section; belongs to the dpy-30 family.

The protein resides in the cytoplasm. Its subcellular location is the cytosol. It is found in the cell projection. The protein localises to the cilium. It localises to the flagellum. The enzyme catalyses AMP + ATP = 2 ADP. The catalysed reaction is a 2'-deoxyribonucleoside 5'-diphosphate + ATP = a 2'-deoxyribonucleoside 5'-triphosphate + ADP. It carries out the reaction a ribonucleoside 5'-diphosphate + ATP = a ribonucleoside 5'-triphosphate + ADP. Its function is as follows. Nucleoside monophosphate (NMP) kinase that catalyzes the reversible transfer of the terminal phosphate group between nucleoside triphosphates and monophosphates. Has highest activity toward AMP, and weaker activity toward dAMP, CMP and dCMP. Also displays broad nucleoside diphosphate kinase activity. Involved in maintaining ciliary structure and function. This is Adenylate kinase 7 (AK7) from Macaca fascicularis (Crab-eating macaque).